The following is a 344-amino-acid chain: Photosystem II protein D1 (344 aa).

3 helical membrane passes run 29–46 (YIGW…TATT), 118–133 (HFFI…EWEL), and 142–156 (WIAV…AATA). Residue His118 participates in chlorophyll a binding. Tyr126 contributes to the pheophytin a binding site. Positions 170 and 189 each coordinate [CaMn4O5] cluster. Residues 197 to 218 (FHMLGVAGVFGGSLFSAMHGSL) form a helical membrane-spanning segment. His198 is a binding site for chlorophyll a. Residues His215 and 264–265 (SF) contribute to the a quinone site. Fe cation is bound at residue His215. A Fe cation-binding site is contributed by His272. The helical transmembrane segment at 274 to 288 (FLAAWPVIGIWFTAM) threads the bilayer. [CaMn4O5] cluster is bound by residues His332, Glu333, Asp342, and Ala344.

The protein belongs to the reaction center PufL/M/PsbA/D family. PSII is composed of 1 copy each of membrane proteins PsbA, PsbB, PsbC, PsbD, PsbE, PsbF, PsbH, PsbI, PsbJ, PsbK, PsbL, PsbM, PsbT, PsbY, PsbZ, Psb30/Ycf12, at least 3 peripheral proteins of the oxygen-evolving complex and a large number of cofactors. It forms dimeric complexes. The cofactor is The D1/D2 heterodimer binds P680, chlorophylls that are the primary electron donor of PSII, and subsequent electron acceptors. It shares a non-heme iron and each subunit binds pheophytin, quinone, additional chlorophylls, carotenoids and lipids. D1 provides most of the ligands for the Mn4-Ca-O5 cluster of the oxygen-evolving complex (OEC). There is also a Cl(-1) ion associated with D1 and D2, which is required for oxygen evolution. The PSII complex binds additional chlorophylls, carotenoids and specific lipids.. Tyr-161 forms a radical intermediate that is referred to as redox-active TyrZ, YZ or Y-Z.

The protein resides in the plastid. It is found in the chloroplast thylakoid membrane. The catalysed reaction is 2 a plastoquinone + 4 hnu + 2 H2O = 2 a plastoquinol + O2. In terms of biological role, photosystem II (PSII) is a light-driven water:plastoquinone oxidoreductase that uses light energy to abstract electrons from H(2)O, generating O(2) and a proton gradient subsequently used for ATP formation. It consists of a core antenna complex that captures photons, and an electron transfer chain that converts photonic excitation into a charge separation. The D1/D2 (PsbA/PsbD) reaction center heterodimer binds P680, the primary electron donor of PSII as well as several subsequent electron acceptors. This is Photosystem II protein D1 from Bigelowiella natans (Pedinomonas minutissima).